Consider the following 482-residue polypeptide: tRNA sulfurtransferase (482 aa).

Residues 61 to 165 form the THUMP domain; it reads QQVLEILTTT…DDKLNQILAH (105 aa). ATP contacts are provided by residues 183-184, Lys-265, Gly-287, and Gln-296; that span reads LI. Cys-344 and Cys-456 form a disulfide bridge. The Rhodanese domain maps to 404-482; it reads IEEHAVVLDI…GFNNVKVYRP (79 aa). Catalysis depends on Cys-456, which acts as the Cysteine persulfide intermediate.

The protein belongs to the ThiI family.

Its subcellular location is the cytoplasm. It carries out the reaction [ThiI sulfur-carrier protein]-S-sulfanyl-L-cysteine + a uridine in tRNA + 2 reduced [2Fe-2S]-[ferredoxin] + ATP + H(+) = [ThiI sulfur-carrier protein]-L-cysteine + a 4-thiouridine in tRNA + 2 oxidized [2Fe-2S]-[ferredoxin] + AMP + diphosphate. It catalyses the reaction [ThiS sulfur-carrier protein]-C-terminal Gly-Gly-AMP + S-sulfanyl-L-cysteinyl-[cysteine desulfurase] + AH2 = [ThiS sulfur-carrier protein]-C-terminal-Gly-aminoethanethioate + L-cysteinyl-[cysteine desulfurase] + A + AMP + 2 H(+). It functions in the pathway cofactor biosynthesis; thiamine diphosphate biosynthesis. Catalyzes the ATP-dependent transfer of a sulfur to tRNA to produce 4-thiouridine in position 8 of tRNAs, which functions as a near-UV photosensor. Also catalyzes the transfer of sulfur to the sulfur carrier protein ThiS, forming ThiS-thiocarboxylate. This is a step in the synthesis of thiazole, in the thiamine biosynthesis pathway. The sulfur is donated as persulfide by IscS. The polypeptide is tRNA sulfurtransferase (Vibrio vulnificus (strain CMCP6)).